Reading from the N-terminus, the 180-residue chain is NADH-quinone oxidoreductase subunit I (180 aa).

4Fe-4S ferredoxin-type domains follow at residues 48 to 80 (IVLT…LQKA) and 90 to 119 (EFFR…LTPD). [4Fe-4S] cluster-binding residues include C60, C63, C66, C70, C99, C102, C105, and C109.

Belongs to the complex I 23 kDa subunit family. NDH-1 is composed of 13 different subunits. Subunits NuoA, H, J, K, L, M, N constitute the membrane sector of the complex. The cofactor is [4Fe-4S] cluster.

The protein localises to the cell inner membrane. The enzyme catalyses a quinone + NADH + 5 H(+)(in) = a quinol + NAD(+) + 4 H(+)(out). Functionally, NDH-1 shuttles electrons from NADH, via FMN and iron-sulfur (Fe-S) centers, to quinones in the respiratory chain. The immediate electron acceptor for the enzyme in this species is believed to be ubiquinone. Couples the redox reaction to proton translocation (for every two electrons transferred, four hydrogen ions are translocated across the cytoplasmic membrane), and thus conserves the redox energy in a proton gradient. The chain is NADH-quinone oxidoreductase subunit I from Sodalis glossinidius (strain morsitans).